The primary structure comprises 1755 residues: Periplakin (1755 aa).

Basic residues predominate over residues 1 to 11 (MHSLFRKRNKG). The segment at 1 to 20 (MHSLFRKRNKGKYSPTVQTR) is disordered. A Phosphoserine modification is found at S14. Coiled coils occupy residues 16-125 (TVQT…KQMY) and 182-387 (LAKD…QQVV). Spectrin repeat units follow at residues 214–315 (QDYM…SHLK), 321–483 (HQFH…HALQ), and 503–610 (RQLL…EKVD). The SH3 domain occupies 397–453 (LKPIPVEALCDFESDQGLISRGYSYTLQKNNGESWELTDSTGKKLAAPAVCFIIPPT). The residue at position 463 (S463) is a Phosphoserine. 2 coiled-coil regions span residues 611 to 819 (VANR…RNSH) and 883 to 1644 (LSSG…SVAV). Residues S885, S947, S1583, and S1656 each carry the phosphoserine modification. The segment at 1556–1755 (ELDFLREENH…ELAVLVSGQK (200 aa)) is interacts with BFSP2 and VIM. Plectin repeat units lie at residues 1650 to 1684 (ENHLRRSIVVIDPDTGRELSPEEAHRAGLIDWKMF) and 1699 to 1734 (VKGPNGESSVIHDRKSGKKFSIEDALQSGRLTAAQY).

It belongs to the plakin or cytolinker family. In terms of assembly, homodimer or a heterodimer with EVPL. Found in a complex composed of PPL (via C-terminal linker domain), BFSP1 and BFSP2 in the retinal lens. Within the complex interacts (via C-terminal linker domain) with BFSP2. Interacts with VIM. Binds to the PH domain of AKT1. Interacts with FCGR1A. May interact with PPHLN1. Expressed in the retinal lens (at protein level).

The protein localises to the cell junction. Its subcellular location is the desmosome. It is found in the cytoplasm. The protein resides in the cytoskeleton. It localises to the cell membrane. In terms of biological role, component of the cornified envelope of keratinocytes. May link the cornified envelope to desmosomes and intermediate filaments. May act as a localization signal in PKB/AKT-mediated signaling. The sequence is that of Periplakin (Ppl) from Mus musculus (Mouse).